The following is a 388-amino-acid chain: Chorismate synthase (388 aa).

R39 and R45 together coordinate NADP(+). FMN-binding positions include 130–132 (RSS), 251–252 (NA), G296, 311–315 (KPIPT), and R337.

It belongs to the chorismate synthase family. In terms of assembly, homotetramer. It depends on FMNH2 as a cofactor.

It catalyses the reaction 5-O-(1-carboxyvinyl)-3-phosphoshikimate = chorismate + phosphate. Its pathway is metabolic intermediate biosynthesis; chorismate biosynthesis; chorismate from D-erythrose 4-phosphate and phosphoenolpyruvate: step 7/7. Its function is as follows. Catalyzes the anti-1,4-elimination of the C-3 phosphate and the C-6 proR hydrogen from 5-enolpyruvylshikimate-3-phosphate (EPSP) to yield chorismate, which is the branch point compound that serves as the starting substrate for the three terminal pathways of aromatic amino acid biosynthesis. This reaction introduces a second double bond into the aromatic ring system. This Lactococcus lactis subsp. lactis (strain IL1403) (Streptococcus lactis) protein is Chorismate synthase.